The chain runs to 175 residues: NADH-ubiquinone oxidoreductase chain 6 (175 aa).

Transmembrane regions (helical) follow at residues 1–21 (MMYM…GFSS), 26–46 (IYGG…VMGL), 47–67 (GGSF…LVVF), 87–107 (VILS…VWMI), and 152–172 (WLVI…IEIT).

This sequence belongs to the complex I subunit 6 family.

The protein resides in the mitochondrion membrane. The enzyme catalyses a ubiquinone + NADH + 5 H(+)(in) = a ubiquinol + NAD(+) + 4 H(+)(out). In terms of biological role, core subunit of the mitochondrial membrane respiratory chain NADH dehydrogenase (Complex I) that is believed to belong to the minimal assembly required for catalysis. Complex I functions in the transfer of electrons from NADH to the respiratory chain. The immediate electron acceptor for the enzyme is believed to be ubiquinone. This chain is NADH-ubiquinone oxidoreductase chain 6 (MT-ND6), found in Dasypus novemcinctus (Nine-banded armadillo).